The primary structure comprises 827 residues: Putative potassium transporter 12 (827 aa).

Residues 1-31 (MEEIEEGSSNNSIRRVGTGSSDRRWVDGSEV) form a disordered region. The Cytoplasmic portion of the chain corresponds to 1–82 (MEEIEEGSSN…AGSHGHNLKD (82 aa)). Residues 83–103 (LSLLTTLGIAFQTLGVVYGDM) form a helical membrane-spanning segment. Over 104–129 (GTSPLYVFSDVFSKVPIRSEVDVLGA) the chain is Extracellular. The chain crosses the membrane as a helical span at residues 130-150 (LSLVIYTIAVIPLAKYVFVVL). At 151–216 (KANDNGEGGT…ALETKGYLKT (66 aa)) the chain is on the cytoplasmic side. Residues 217–237 (LLLLLVLMGTSMIIGDGILTP) traverse the membrane as a helical segment. The Extracellular portion of the chain corresponds to 238-253 (AMSVMSAMSGLQGEVK). A helical transmembrane segment spans residues 254-274 (GFGTNALVMSSIVILVALFSI). Over 275-281 (QRFGTGK) the chain is Cytoplasmic. The helical transmembrane segment at 282–302 (VGFLFAPVLALWFFSLGAIGI) threads the bilayer. Topologically, residues 303–335 (YNLLKYDFTVIRALNPFYIVLFFNKNSKQAWSA) are extracellular. A helical transmembrane segment spans residues 336–356 (LGGCVLCITGAEAMFADLGHF). Over 357-363 (SVRSIQM) the chain is Cytoplasmic. The chain crosses the membrane as a helical span at residues 364–384 (AFTCVVFPCLLLAYMGQAAYL). Residues 385–402 (TKHPEASARIFYDSVPKS) lie on the Extracellular side of the membrane. The chain crosses the membrane as a helical span at residues 403–423 (LFWPVFVIATLAAMIASQAMI). The Cytoplasmic portion of the chain corresponds to 424–454 (SATFSCVKQAMALGCFPRLKIIHTSKKRIGQ). A helical transmembrane segment spans residues 455–475 (IYIPVINWFLMIMCILVVSIF). The Extracellular portion of the chain corresponds to 476-480 (RSTTH). A run of 2 helical transmembrane segments spans residues 481-501 (IANA…VLVT) and 502-522 (LVML…PLIF). Over 523–536 (GSVETIYLLAVLTK) the chain is Extracellular. A helical membrane pass occupies residues 537–557 (ILEGGWVPLVFATFFLTVMYI). Residues 558–827 (WNYGSVLKYQ…ILQAGMTYMV (270 aa)) are Cytoplasmic-facing. Positions 728–750 (RSEPEQELDSEVLPSSSVGSSME) are disordered. The span at 738–748 (EVLPSSSVGSS) shows a compositional bias: low complexity.

This sequence belongs to the HAK/KUP transporter (TC 2.A.72.3) family.

It is found in the cell membrane. Its function is as follows. Putative potassium transporter. This is Putative potassium transporter 12 (POT12) from Arabidopsis thaliana (Mouse-ear cress).